Here is a 154-residue protein sequence, read N- to C-terminus: Endoribonuclease YbeY (154 aa).

Zn(2+) is bound by residues His-113, His-117, and His-123.

The protein belongs to the endoribonuclease YbeY family. Requires Zn(2+) as cofactor.

Its subcellular location is the cytoplasm. Its function is as follows. Single strand-specific metallo-endoribonuclease involved in late-stage 70S ribosome quality control and in maturation of the 3' terminus of the 16S rRNA. This is Endoribonuclease YbeY from Vibrio cholerae serotype O1 (strain ATCC 39315 / El Tor Inaba N16961).